The following is a 630-amino-acid chain: Sodium-dependent serotonin transporter (630 aa).

2 stretches are compositionally biased toward polar residues: residues 1-11 (METTPLNSQKV) and 42-55 (QISN…STSA). Positions 1 to 63 (METTPLNSQK…SAGDEAPHST (63 aa)) are disordered. At 1–87 (METTPLNSQK…ERETWGKKMD (87 aa)) the chain is on the cytoplasmic side. Tyr47 carries the post-translational modification Phosphotyrosine. Residues 88 to 112 (FLLSVIGYAVDLGNIWRFPYICYQN) form a helical membrane-spanning segment. 5 residues coordinate Na(+): Gly94, Ala96, Val97, Asp98, and Asn101. Residue Asp98 coordinates serotonin. The Extracellular portion of the chain corresponds to 113–115 (GGG). Residues 116–135 (AFLLPYTIMAIFGGIPLFYM) traverse the membrane as a helical segment. Residues 136–160 (ELALGQYHRNGCISIWKKICPIFKG) are Cytoplasmic-facing. Tyr142 is subject to Phosphotyrosine. A helical transmembrane segment spans residues 161-186 (IGYAICIIAFYIASYYNTIIAWALYY). Residues 187-252 (LISSFTDQLP…KGLQDLGTIS (66 aa)) lie on the Extracellular side of the membrane. Cys200 and Cys209 are oxidised to a cystine. N-linked (GlcNAc...) asparagine glycosylation is found at Asn208 and Asn217. The chain crosses the membrane as a helical span at residues 253–271 (WQLALCIMLIFTIIYFSIW). At 272–277 (KGVKTS) the chain is on the cytoplasmic side. Thr276 is subject to Phosphothreonine. The helical transmembrane segment at 278–297 (GKVVWVTATFPYIVLSVLLV) threads the bilayer. Residues 298–324 (RGATLPGAWRGVVFYLKPNWQKLLETG) lie on the Extracellular side of the membrane. Residues 325 to 347 (VWVDAAAQIFFSLGPGFGVLLAF) form a helical membrane-spanning segment. Ser336 lines the Na(+) pocket. Residues 348–360 (ASYNKFNNNCYQD) lie on the Cytoplasmic side of the membrane. A helical membrane pass occupies residues 361-380 (ALVTSVVNCMTSFVSGFVIF). Na(+) is bound at residue Asn368. The Extracellular portion of the chain corresponds to 381–421 (TVLGYMAEMRNEDVSEVAKDAGPSLLFITYAEAIANMPAST). Residues 422 to 443 (FFAIIFFLMLITLGLDSTFAGL) form a helical membrane-spanning segment. Residues Leu434, Asp437, and Ser438 each contribute to the Na(+) site. Thr439 serves as a coordination point for serotonin. Residues 444–463 (EGVITAVLDEFPHIWAKRRE) lie on the Cytoplasmic side of the membrane. A helical transmembrane segment spans residues 464–483 (WFVLIVVITCILGSLLTLTS). Residues 484–494 (GGAYVVTLLEE) are Extracellular-facing. Residues Glu494 and Tyr495 each coordinate serotonin. A helical transmembrane segment spans residues 495 to 516 (YATGPAVLTVALIEAVVVSWFY). Topologically, residues 517 to 538 (GITQFCSDVKEMLGFSPGWFWR) are cytoplasmic. The helical transmembrane segment at 539–558 (ICWVAISPLFLLFIICSFLM) threads the bilayer. Residues Phe556 and Ser559 each contribute to the serotonin site. Over 559–574 (SPPQLRLFQYNYPHWS) the chain is Extracellular. Residues 575–595 (IILGYCIGTSSVICIPIYIIY) form a helical membrane-spanning segment. Residues 596-630 (RLISTPGTLKERIIKSITPETPTEIPCGDIRMNAV) are Cytoplasmic-facing. The segment at 616-624 (TPTEIPCGD) is interaction with RAB4A.

It belongs to the sodium:neurotransmitter symporter (SNF) (TC 2.A.22) family. SLC6A4 subfamily. As to quaternary structure, monomer or homooligomer. Interacts (via C-terminus) with SCAMP2; the interaction is direct and retains transporter molecules intracellularly. Interacts with filamentous actin and STX1A. Interacts (via the N-terminus) with STX1A (via the H3 domain); this interaction regulates SLC4A6 channel conductance. Interacts with SEC23A, SEC24C and PATJ. Interacts with NOS1; the interaction may diminish the cell surface localization of SERT in the brain and, correspondingly, reduce serotonin reuptake. Interacts with TGFB1I1. Interacts with ITGAV:ITGB3. Interacts (via C-terminus) with ITGB3; this interaction regulates SLC6A4 trafficking. In terms of processing, phosphorylation at Thr-276 increases 5-HT uptake and is required for cGMP-mediated SERT regulation. As to expression, expressed in the lung, midbrain and brainstem regions. Expressed in brainstem raphe neurons.

It is found in the cell membrane. The protein localises to the endomembrane system. Its subcellular location is the endosome membrane. It localises to the synapse. The protein resides in the cell junction. It is found in the focal adhesion. The protein localises to the cell projection. Its subcellular location is the neuron projection. The catalysed reaction is serotonin(out) + K(+)(in) + Na(+)(out) + H(+)(in) = serotonin(in) + K(+)(out) + Na(+)(in) + H(+)(out). In terms of biological role, serotonin transporter that cotransports serotonin with one Na(+) ion in exchange for one K(+) ion and possibly one proton in an overall electroneutral transport cycle. Transports serotonin across the plasma membrane from the extracellular compartment to the cytosol thus limiting serotonin intercellular signaling. Essential for serotonin homeostasis in the central nervous system. In the developing somatosensory cortex, acts in glutamatergic neurons to control serotonin uptake and its trophic functions accounting for proper spatial organization of cortical neurons and elaboration of sensory circuits. In the mature cortex, acts primarily in brainstem raphe neurons to mediate serotonin uptake from the synaptic cleft back into the pre-synaptic terminal thus terminating serotonin signaling at the synapse. Modulates mucosal serotonin levels in the gastrointestinal tract through uptake and clearance of serotonin in enterocytes. Required for enteric neurogenesis and gastrointestinal reflexes. Regulates blood serotonin levels by ensuring rapid high affinity uptake of serotonin from plasma to platelets, where it is further stored in dense granules via vesicular monoamine transporters and then released upon stimulation. Mechanistically, the transport cycle starts with an outward-open conformation having Na1(+) and Cl(-) sites occupied. The binding of a second extracellular Na2(+) ion and serotonin substrate leads to structural changes to outward-occluded to inward-occluded to inward-open, where the Na2(+) ion and serotonin are released into the cytosol. Binding of intracellular K(+) ion induces conformational transitions to inward-occluded to outward-open and completes the cycle by releasing K(+) possibly together with a proton bound to Asp-98 into the extracellular compartment. Na1(+) and Cl(-) ions remain bound throughout the transport cycle. Additionally, displays serotonin-induced channel-like conductance for monovalent cations, mainly Na(+) ions. The channel activity is uncoupled from the transport cycle and may contribute to the membrane resting potential or excitability. This is Sodium-dependent serotonin transporter from Mus musculus (Mouse).